The chain runs to 142 residues: Hemoglobin subunit alpha-2 (142 aa).

One can recognise a Globin domain in the interval 2–142; that stretch reads VLSAADKTNV…VSTVLTSKYR (141 aa). His-59 contributes to the O2 binding site. His-88 serves as a coordination point for heme b.

It belongs to the globin family. As to quaternary structure, heterotetramer of two alpha chains and two beta chains. Red blood cells.

Involved in oxygen transport from the lung to the various peripheral tissues. Functionally, hemopressin acts as an antagonist peptide of the cannabinoid receptor CNR1. Hemopressin-binding efficiently blocks cannabinoid receptor CNR1 and subsequent signaling. The polypeptide is Hemoglobin subunit alpha-2 (HBA2) (Equus quagga burchellii (Burchell's zebra)).